The chain runs to 130 residues: Histone H2B (130 aa).

Positions 1-31 are disordered; it reads MAKSARHVTGKAPSSLDAHDRKKSKKKSSSM. Lys-122 is covalently cross-linked (Glycyl lysine isopeptide (Lys-Gly) (interchain with G-Cter in ubiquitin)).

This sequence belongs to the histone H2B family. The nucleosome is a histone octamer containing two molecules each of H2A, H2B, H3 and H4 assembled in one H3-H4 heterotetramer and two H2A-H2B heterodimers. The octamer wraps approximately 147 bp of DNA. Post-translationally, monoubiquitinated to form H2BK123ub1. H2BK123ub1 gives a specific tag for epigenetic transcriptional activation and is also prerequisite for H3K4me and H3K79me formation.

The protein resides in the nucleus. The protein localises to the chromosome. Core component of nucleosome. Nucleosomes wrap and compact DNA into chromatin, limiting DNA accessibility to the cellular machineries which require DNA as a template. Histones thereby play a central role in transcription regulation, DNA repair, DNA replication and chromosomal stability. DNA accessibility is regulated via a complex set of post-translational modifications of histones, also called histone code, and nucleosome remodeling. This is Histone H2B (HTB1) from Encephalitozoon cuniculi (strain GB-M1) (Microsporidian parasite).